The chain runs to 189 residues: MAQLYYKYGTMNSGKTIEILKVAHNYEEQGKPVVIMTSALDTRDGFGIVSSRIGMRREAIPISNDIDIFTFIAQLEEKPYCVLIDESQFLSKQNVYDLARVVDELNVPVMAFGLKNDFQNNLFEGSKHLLLLADKIDEIKTICQYCSKKATMVLRTENGKPVYEGDQIQIGGNETYIPVCRKHYFNPEI.

Residues glycine 9–threonine 16 and aspartate 85–glutamine 88 contribute to the ATP site. Glutamate 86 functions as the Proton acceptor in the catalytic mechanism. Zn(2+)-binding residues include cysteine 143, cysteine 146, cysteine 180, and histidine 183.

The protein belongs to the thymidine kinase family. As to quaternary structure, homotetramer.

It is found in the cytoplasm. The enzyme catalyses thymidine + ATP = dTMP + ADP + H(+). This chain is Thymidine kinase, found in Streptococcus pyogenes serotype M6 (strain ATCC BAA-946 / MGAS10394).